We begin with the raw amino-acid sequence, 494 residues long: Sulfate adenylyltransferase subunit 1 (494 aa).

In terms of domain architecture, tr-type G spans 24-240 (TRPLRLITCG…LELATVRSAQ (217 aa)). Residues 33–40 (GSVDDGKS) form a G1 region. 33–40 (GSVDDGKS) is a binding site for GTP. The segment at 91 to 95 (GITID) is G2. Positions 112-115 (DTPG) are G3. GTP-binding positions include 112 to 116 (DTPGH) and 167 to 170 (NKID). The tract at residues 167–170 (NKID) is G4. The tract at residues 204 to 206 (SAL) is G5.

The protein belongs to the TRAFAC class translation factor GTPase superfamily. Classic translation factor GTPase family. CysN/NodQ subfamily. Heterodimer composed of CysD, the smaller subunit, and CysN.

The catalysed reaction is sulfate + ATP + H(+) = adenosine 5'-phosphosulfate + diphosphate. The protein operates within sulfur metabolism; hydrogen sulfide biosynthesis; sulfite from sulfate: step 1/3. With CysD forms the ATP sulfurylase (ATPS) that catalyzes the adenylation of sulfate producing adenosine 5'-phosphosulfate (APS) and diphosphate, the first enzymatic step in sulfur assimilation pathway. APS synthesis involves the formation of a high-energy phosphoric-sulfuric acid anhydride bond driven by GTP hydrolysis by CysN coupled to ATP hydrolysis by CysD. In Rhizobium tropici, this protein is Sulfate adenylyltransferase subunit 1.